The primary structure comprises 271 residues: Putative phosphoenolpyruvate synthase regulatory protein (271 aa).

152–159 (GVSRCGKT) lines the ADP pocket.

It belongs to the pyruvate, phosphate/water dikinase regulatory protein family. PSRP subfamily.

The enzyme catalyses [pyruvate, water dikinase] + ADP = [pyruvate, water dikinase]-phosphate + AMP + H(+). It catalyses the reaction [pyruvate, water dikinase]-phosphate + phosphate + H(+) = [pyruvate, water dikinase] + diphosphate. Its function is as follows. Bifunctional serine/threonine kinase and phosphorylase involved in the regulation of the phosphoenolpyruvate synthase (PEPS) by catalyzing its phosphorylation/dephosphorylation. The protein is Putative phosphoenolpyruvate synthase regulatory protein of Legionella pneumophila (strain Lens).